Reading from the N-terminus, the 1143-residue chain is DNA polymerase II large subunit (1143 aa).

The protein belongs to the archaeal DNA polymerase II family. As to quaternary structure, heterodimer of a large subunit and a small subunit.

It catalyses the reaction DNA(n) + a 2'-deoxyribonucleoside 5'-triphosphate = DNA(n+1) + diphosphate. It carries out the reaction Exonucleolytic cleavage in the 3'- to 5'-direction to yield nucleoside 5'-phosphates.. In terms of biological role, possesses two activities: a DNA synthesis (polymerase) and an exonucleolytic activity that degrades single-stranded DNA in the 3'- to 5'-direction. Has a template-primer preference which is characteristic of a replicative DNA polymerase. The polypeptide is DNA polymerase II large subunit (polC) (Archaeoglobus fulgidus (strain ATCC 49558 / DSM 4304 / JCM 9628 / NBRC 100126 / VC-16)).